The following is a 237-amino-acid chain: Ribonuclease PH (237 aa).

Residues R86 and 124 to 126 contribute to the phosphate site; that span reads GTR.

The protein belongs to the RNase PH family. Homohexameric ring arranged as a trimer of dimers.

The enzyme catalyses tRNA(n+1) + phosphate = tRNA(n) + a ribonucleoside 5'-diphosphate. Phosphorolytic 3'-5' exoribonuclease that plays an important role in tRNA 3'-end maturation. Removes nucleotide residues following the 3'-CCA terminus of tRNAs; can also add nucleotides to the ends of RNA molecules by using nucleoside diphosphates as substrates, but this may not be physiologically important. Probably plays a role in initiation of 16S rRNA degradation (leading to ribosome degradation) during starvation. This is Ribonuclease PH from Shewanella baltica (strain OS223).